Here is a 487-residue protein sequence, read N- to C-terminus: Glutamyl-tRNA(Gln) amidotransferase subunit A (487 aa).

Catalysis depends on charge relay system residues Lys77 and Ser152. Residue Ser176 is the Acyl-ester intermediate of the active site.

It belongs to the amidase family. GatA subfamily. In terms of assembly, heterotrimer of A, B and C subunits.

The catalysed reaction is L-glutamyl-tRNA(Gln) + L-glutamine + ATP + H2O = L-glutaminyl-tRNA(Gln) + L-glutamate + ADP + phosphate + H(+). Allows the formation of correctly charged Gln-tRNA(Gln) through the transamidation of misacylated Glu-tRNA(Gln) in organisms which lack glutaminyl-tRNA synthetase. The reaction takes place in the presence of glutamine and ATP through an activated gamma-phospho-Glu-tRNA(Gln). The chain is Glutamyl-tRNA(Gln) amidotransferase subunit A from Lysinibacillus sphaericus (strain C3-41).